Consider the following 260-residue polypeptide: Coiled-coil domain-containing protein 127 (260 aa).

Positions 49–135 (QKEVEKEREA…QVMQEKRQVQ (87 aa)) form a coiled coil.

In Homo sapiens (Human), this protein is Coiled-coil domain-containing protein 127 (CCDC127).